Consider the following 125-residue polypeptide: Histone H2A (125 aa).

Positions 1–18 (MSGRGKGGKVKAKAKSRS) are enriched in basic residues. A disordered region spans residues 1-21 (MSGRGKGGKVKAKAKSRSSRA). Serine 2 carries the post-translational modification N-acetylserine. The residue at position 2 (serine 2) is a Phosphoserine. A Glycyl lysine isopeptide (Lys-Gly) (interchain with G-Cter in ubiquitin) cross-link involves residue lysine 119.

This sequence belongs to the histone H2A family. In terms of assembly, the nucleosome is a histone octamer containing two molecules each of H2A, H2B, H3 and H4 assembled in one H3-H4 heterotetramer and two H2A-H2B heterodimers. The octamer wraps approximately 147 bp of DNA. In terms of processing, monoubiquitination of Lys-119 gives a specific tag for epigenetic transcriptional repression. Post-translationally, phosphorylation on Ser-2 is enhanced during mitosis. Phosphorylation on Ser-2 directly represses transcription.

Its subcellular location is the nucleus. The protein localises to the chromosome. Functionally, core component of nucleosome. Nucleosomes wrap and compact DNA into chromatin, limiting DNA accessibility to the cellular machineries which require DNA as a template. Histones thereby play a central role in transcription regulation, DNA repair, DNA replication and chromosomal stability. DNA accessibility is regulated via a complex set of post-translational modifications of histones, also called histone code, and nucleosome remodeling. The polypeptide is Histone H2A (Chironomus thummi thummi (Midge)).